Here is a 154-residue protein sequence, read N- to C-terminus: Superoxide dismutase [Cu-Zn] (154 aa).

Cu cation is bound by residues H47, H49, and H64. Cysteines 58 and 147 form a disulfide. Residues H64, H72, H81, and D84 each coordinate Zn(2+). A Cu cation-binding site is contributed by H121. Position 144 (R144) interacts with substrate.

It belongs to the Cu-Zn superoxide dismutase family. In terms of assembly, homodimer. The cofactor is Cu cation. Zn(2+) serves as cofactor.

The protein resides in the cytoplasm. It catalyses the reaction 2 superoxide + 2 H(+) = H2O2 + O2. Functionally, destroys radicals which are normally produced within the cells and which are toxic to biological systems. In Eremothecium gossypii (strain ATCC 10895 / CBS 109.51 / FGSC 9923 / NRRL Y-1056) (Yeast), this protein is Superoxide dismutase [Cu-Zn] (SOD1).